The sequence spans 457 residues: Bifunctional protein GlmU (457 aa).

Residues 1–227 are pyrophosphorylase; sequence MTQLSVVILA…FMEVEGANNR (227 aa). Residues 9 to 12, Lys-23, Gln-74, 79 to 80, 101 to 103, Gly-138, Glu-152, Asn-167, and Asn-225 contribute to the UDP-N-acetyl-alpha-D-glucosamine site; these read LAAG, GT, and YGD. Residue Asp-103 participates in Mg(2+) binding. Asn-225 is a Mg(2+) binding site. The linker stretch occupies residues 228–248; the sequence is LQLAALERFYQKTQAEKLLLA. The segment at 249–457 is N-acetyltransferase; that stretch reads GVRLIDPARF…QRPTKKKIAD (209 aa). The UDP-N-acetyl-alpha-D-glucosamine site is built by Arg-331 and Lys-349. His-361 functions as the Proton acceptor in the catalytic mechanism. UDP-N-acetyl-alpha-D-glucosamine contacts are provided by Tyr-364 and Asn-375. Acetyl-CoA is bound by residues Ala-378, 384–385, Ser-403, Ala-421, and Arg-438; that span reads NY.

It in the N-terminal section; belongs to the N-acetylglucosamine-1-phosphate uridyltransferase family. The protein in the C-terminal section; belongs to the transferase hexapeptide repeat family. In terms of assembly, homotrimer. The cofactor is Mg(2+).

Its subcellular location is the cytoplasm. It catalyses the reaction alpha-D-glucosamine 1-phosphate + acetyl-CoA = N-acetyl-alpha-D-glucosamine 1-phosphate + CoA + H(+). It carries out the reaction N-acetyl-alpha-D-glucosamine 1-phosphate + UTP + H(+) = UDP-N-acetyl-alpha-D-glucosamine + diphosphate. Its pathway is nucleotide-sugar biosynthesis; UDP-N-acetyl-alpha-D-glucosamine biosynthesis; N-acetyl-alpha-D-glucosamine 1-phosphate from alpha-D-glucosamine 6-phosphate (route II): step 2/2. It functions in the pathway nucleotide-sugar biosynthesis; UDP-N-acetyl-alpha-D-glucosamine biosynthesis; UDP-N-acetyl-alpha-D-glucosamine from N-acetyl-alpha-D-glucosamine 1-phosphate: step 1/1. It participates in bacterial outer membrane biogenesis; LPS lipid A biosynthesis. Its function is as follows. Catalyzes the last two sequential reactions in the de novo biosynthetic pathway for UDP-N-acetylglucosamine (UDP-GlcNAc). The C-terminal domain catalyzes the transfer of acetyl group from acetyl coenzyme A to glucosamine-1-phosphate (GlcN-1-P) to produce N-acetylglucosamine-1-phosphate (GlcNAc-1-P), which is converted into UDP-GlcNAc by the transfer of uridine 5-monophosphate (from uridine 5-triphosphate), a reaction catalyzed by the N-terminal domain. This chain is Bifunctional protein GlmU, found in Actinobacillus pleuropneumoniae serotype 5b (strain L20).